The chain runs to 205 residues: Transcriptional regulator GfcR (205 aa).

This sequence belongs to the purine/pyrimidine phosphoribosyltransferase family. GfcR subfamily.

This chain is Transcriptional regulator GfcR, found in Methanococcus vannielii (strain ATCC 35089 / DSM 1224 / JCM 13029 / OCM 148 / SB).